Consider the following 183-residue polypeptide: uncharacterized protein (183 aa).

Transmembrane regions (helical) follow at residues 37-59, 79-98, 110-132, and 142-161; these read LFGY…PRQF, AILL…VTSV, WRTF…VLVL, and AFYA…TYVF.

It is found in the cell membrane. This is an uncharacterized protein from Archaeoglobus fulgidus (strain ATCC 49558 / DSM 4304 / JCM 9628 / NBRC 100126 / VC-16).